We begin with the raw amino-acid sequence, 191 residues long: ATP-dependent Clp protease proteolytic subunit 1 (191 aa).

S91 serves as the catalytic Nucleophile. H116 is a catalytic residue.

This sequence belongs to the peptidase S14 family. Fourteen ClpP subunits assemble into 2 heptameric rings which stack back to back to give a disk-like structure with a central cavity, resembling the structure of eukaryotic proteasomes.

Its subcellular location is the cytoplasm. It catalyses the reaction Hydrolysis of proteins to small peptides in the presence of ATP and magnesium. alpha-casein is the usual test substrate. In the absence of ATP, only oligopeptides shorter than five residues are hydrolyzed (such as succinyl-Leu-Tyr-|-NHMec, and Leu-Tyr-Leu-|-Tyr-Trp, in which cleavage of the -Tyr-|-Leu- and -Tyr-|-Trp bonds also occurs).. Its function is as follows. Cleaves peptides in various proteins in a process that requires ATP hydrolysis. Has a chymotrypsin-like activity. Plays a major role in the degradation of misfolded proteins. The chain is ATP-dependent Clp protease proteolytic subunit 1 from Chlamydia caviae (strain ATCC VR-813 / DSM 19441 / 03DC25 / GPIC) (Chlamydophila caviae).